Consider the following 833-residue polypeptide: AdoMet-dependent rRNA methyltransferase SPB1 (833 aa).

Residues Gly-59, Trp-61, Asp-79, Asp-95, and Asp-120 each contribute to the S-adenosyl-L-methionine site. Lys-160 functions as the Proton acceptor in the catalytic mechanism. 2 coiled-coil regions span residues 348 to 389 (EEEQ…QLNM) and 453 to 481 (RDEL…SERD). Residues 477–493 (KSERDAKFRAKQARESS) are compositionally biased toward basic and acidic residues. Disordered regions lie at residues 477-532 (KSER…SDDD), 592-645 (KRKL…EKHS), and 776-810 (VTKK…GKYK). 2 stretches are compositionally biased toward acidic residues: residues 505-532 (QSDE…SDDD) and 622-634 (EDGD…DSEE). The segment covering 635-645 (EAKRTKQEKHS) has biased composition (basic and acidic residues). The stretch at 730–782 (AEAKARKKHRAVARLEKLKKKAGLINDDSDKSEKDKAEEIAKLMRKVTKKAKQ) forms a coiled coil.

It belongs to the class I-like SAM-binding methyltransferase superfamily. RNA methyltransferase RlmE family. SPB1 subfamily. As to quaternary structure, component of the nucleolar and nucleoplasmic pre-60S ribosomal particle.

It localises to the nucleus. The protein localises to the nucleolus. The catalysed reaction is a ribonucleotide in rRNA + S-adenosyl-L-methionine = a 2'-O-methylribonucleotide in rRNA + S-adenosyl-L-homocysteine + H(+). Functionally, required for proper assembly of pre-ribosomal particles during the biogenesis of the 60S ribosomal subunit. The protein is AdoMet-dependent rRNA methyltransferase SPB1 of Kluyveromyces lactis (strain ATCC 8585 / CBS 2359 / DSM 70799 / NBRC 1267 / NRRL Y-1140 / WM37) (Yeast).